The following is a 32-amino-acid chain: Peptide tarsal-less AA (32 aa).

A disordered region spans residues 1-32 (MLDPTGTYRRPRDTQDSRQKRRQDCLDPTGQY). The stretch at 2-8 (LDPTGTY) is repeat 1. A 2 X 7 AA repeats of L-D-P-T-G-[TQ]-Y region spans residues 2-32 (LDPTGTYRRPRDTQDSRQKRRQDCLDPTGQY). Over residues 10-25 (RPRDTQDSRQKRRQDC) the composition is skewed to basic and acidic residues. Repeat 2 spans residues 26–32 (LDPTGQY).

The protein resides in the cytoplasm. It is found in the nucleus. Functionally, one of four peptides (tal-1A, tal-2A, tal-3A and tal-AA) produced from a polycistronic gene that function redundantly in several developmental processes. Required in early stages of leg development for the intercalation of the tarsal segments during the mid-third instar stage and later for tarsal joint formation. Promotes the post-translational modification of ovo isoform B (svb) into its active form which in turn initiates trichome development and promotes tarsal joint development. This is likely due to recruitment of the E3 ubiquitin-protein ligase Ubr3 to svb for ubiquitination of its N-terminus, converting svb into a transcriptional activator. Also enhances interaction of Ubr3 with Diap1. Required for correct wing and leg formation through its regulation of several genes including those in the Notch signaling pathway. Essential for denticle formation and may have a role in the developmental timing of trichome differentiation. Essential for the development of taenidial folds in the trachea. The polypeptide is Peptide tarsal-less AA (Drosophila melanogaster (Fruit fly)).